Consider the following 193-residue polypeptide: Probable gluconokinase (193 aa).

Residue 21 to 28 participates in ATP binding; it reads GPAGSGKT.

Belongs to the gluconokinase GntK/GntV family.

The catalysed reaction is D-gluconate + ATP = 6-phospho-D-gluconate + ADP + H(+). It participates in carbohydrate acid metabolism; D-gluconate degradation. The sequence is that of Probable gluconokinase from Schizosaccharomyces pombe (strain 972 / ATCC 24843) (Fission yeast).